The following is a 496-amino-acid chain: GTPase Der (496 aa).

EngA-type G domains are found at residues 3-166 and 208-381; these read PVVA…FDNL and IKLA…RSAT. GTP-binding positions include 9-16, 56-60, 118-121, 214-221, 261-265, and 326-329; these read GRPNVGKS, DTGGI, NKVD, DTAGV, and NKWD. The region spanning 382–466 is the KH-like domain; that stretch reads TRVGTSVLTR…PIRIQFQNSD (85 aa).

Belongs to the TRAFAC class TrmE-Era-EngA-EngB-Septin-like GTPase superfamily. EngA (Der) GTPase family. Associates with the 50S ribosomal subunit.

GTPase that plays an essential role in the late steps of ribosome biogenesis. This is GTPase Der from Vibrio vulnificus (strain YJ016).